The primary structure comprises 254 residues: Ribose-5-phosphate isomerase A (254 aa).

Residues threonine 45–threonine 48, aspartate 105–aspartate 108, and lysine 118–glycine 121 contribute to the substrate site. Glutamate 127 (proton acceptor) is an active-site residue. Lysine 145 lines the substrate pocket.

This sequence belongs to the ribose 5-phosphate isomerase family. As to quaternary structure, homodimer.

It carries out the reaction aldehydo-D-ribose 5-phosphate = D-ribulose 5-phosphate. The protein operates within carbohydrate degradation; pentose phosphate pathway; D-ribose 5-phosphate from D-ribulose 5-phosphate (non-oxidative stage): step 1/1. Functionally, catalyzes the reversible conversion of ribose-5-phosphate to ribulose 5-phosphate. The protein is Ribose-5-phosphate isomerase A of Treponema pallidum subsp. pallidum (strain SS14).